The chain runs to 103 residues: Pro-corazonin (103 aa).

The N-terminal stretch at 1–19 (MSANVTLLLIFVTLASVTA) is a signal peptide. Residue Gln20 is modified to Pyrrolidone carboxylic acid. Asn30 carries the asparagine amide modification. The propeptide occupies 34 to 103 (DQGHLRPELK…NLNAMMDAFY (70 aa)).

In terms of tissue distribution, expressed in corpora cardiaca (CC), corpora allata (CA), antennal lobe (AL) and gnathal ganglion (GNG) (at protein level). Expression in CC and CA detected in all animals, expression in AL and in GNG in some animals.

The protein localises to the secreted. In terms of biological role, cardioactive peptide. Corazonin is probably involved in the physiological regulation of the heart beat. The sequence is that of Pro-corazonin from Agrotis ipsilon (Black cutworm moth).